We begin with the raw amino-acid sequence, 309 residues long: Sulfate adenylyltransferase subunit 2 (309 aa).

Belongs to the PAPS reductase family. CysD subfamily. Heterodimer composed of CysD, the smaller subunit, and CysN.

It carries out the reaction sulfate + ATP + H(+) = adenosine 5'-phosphosulfate + diphosphate. It participates in sulfur metabolism; hydrogen sulfide biosynthesis; sulfite from sulfate: step 1/3. With CysN forms the ATP sulfurylase (ATPS) that catalyzes the adenylation of sulfate producing adenosine 5'-phosphosulfate (APS) and diphosphate, the first enzymatic step in sulfur assimilation pathway. APS synthesis involves the formation of a high-energy phosphoric-sulfuric acid anhydride bond driven by GTP hydrolysis by CysN coupled to ATP hydrolysis by CysD. This is Sulfate adenylyltransferase subunit 2 from Mycobacterium bovis (strain ATCC BAA-935 / AF2122/97).